A 71-amino-acid polypeptide reads, in one-letter code: U3-scytotoxin-Sth1h (71 aa).

An N-terminal signal peptide occupies residues 1 to 33; the sequence is MSQNSITSYKMGFAKHFFLFAVLLCATAMYSVA. Positions 34-39 are excised as a propeptide; that stretch reads EPAQER. Intrachain disulfides connect Cys-46-Cys-60, Cys-53-Cys-64, and Cys-59-Cys-69.

As to expression, expressed by the venom gland.

It is found in the secreted. Its function is as follows. Probable insect neurotoxin with ion channel impairing activity. Does not show activity on 45 human receptors from 9 families (5-hydroxytryptamine, adrenergic, dopamine, muscarinic, histamine, neurotransmitter, opioid, sigma, and gaba(A) receptors). In vivo, when mixed with U3-SYTX-Sth1a does not cause paralytic or lethal activity when injected into crickets. It is noteworthy that crickets are evolutionarily distant from prey species. This Scytodes thoracica (Spitting spider) protein is U3-scytotoxin-Sth1h.